The sequence spans 274 residues: uncharacterized protein (274 aa).

This is an uncharacterized protein from Caenorhabditis elegans.